The chain runs to 682 residues: ATP-dependent zinc metalloprotease FtsH (682 aa).

At Met-1–Thr-7 the chain is on the cytoplasmic side. Residues Ile-8–Gly-28 traverse the membrane as a helical segment. Topologically, residues Thr-29–Thr-138 are periplasmic. Residues Phe-139–Phe-159 traverse the membrane as a helical segment. Topologically, residues Phe-160–Ala-682 are cytoplasmic. Gly-232 to Thr-239 lines the ATP pocket. Zn(2+) is bound at residue His-454. Residue Glu-455 is part of the active site. Positions 458 and 531 each coordinate Zn(2+). The tract at residues Leu-638–Ala-682 is disordered.

This sequence in the central section; belongs to the AAA ATPase family. It in the C-terminal section; belongs to the peptidase M41 family. As to quaternary structure, homohexamer. The cofactor is Zn(2+).

It localises to the cell inner membrane. Functionally, acts as a processive, ATP-dependent zinc metallopeptidase for both cytoplasmic and membrane proteins. Plays a role in the quality control of integral membrane proteins. This chain is ATP-dependent zinc metalloprotease FtsH, found in Haliangium ochraceum (strain DSM 14365 / JCM 11303 / SMP-2).